The chain runs to 216 residues: UPF0502 protein Ent638_1581 (216 aa).

It belongs to the UPF0502 family.

This chain is UPF0502 protein Ent638_1581, found in Enterobacter sp. (strain 638).